Reading from the N-terminus, the 317-residue chain is Malate dehydrogenase (317 aa).

NAD(+) is bound by residues 7-13 and D34; that span reads GAAGGIG. Substrate-binding residues include R81 and R87. NAD(+) contacts are provided by residues N94 and 117-119; that span reads VTN. N119 and R153 together coordinate substrate. H177 functions as the Proton acceptor in the catalytic mechanism. M231 is an NAD(+) binding site.

The protein belongs to the LDH/MDH superfamily. MDH type 1 family. Homodimer.

The catalysed reaction is (S)-malate + NAD(+) = oxaloacetate + NADH + H(+). Its function is as follows. Catalyzes the reversible oxidation of malate to oxaloacetate. The polypeptide is Malate dehydrogenase (Actinobacillus pleuropneumoniae serotype 7 (strain AP76)).